Reading from the N-terminus, the 143-residue chain is ATP synthase subunit b' (143 aa).

Residues 6–26 form a helical membrane-spanning segment; the sequence is ATLPVMALQFILLAVILNAVF.

The protein belongs to the ATPase B chain family. F-type ATPases have 2 components, F(1) - the catalytic core - and F(0) - the membrane proton channel. F(1) has five subunits: alpha(3), beta(3), gamma(1), delta(1), epsilon(1). F(0) has four main subunits: a(1), b(1), b'(1) and c(10-14). The alpha and beta chains form an alternating ring which encloses part of the gamma chain. F(1) is attached to F(0) by a central stalk formed by the gamma and epsilon chains, while a peripheral stalk is formed by the delta, b and b' chains.

It is found in the cellular thylakoid membrane. In terms of biological role, f(1)F(0) ATP synthase produces ATP from ADP in the presence of a proton or sodium gradient. F-type ATPases consist of two structural domains, F(1) containing the extramembraneous catalytic core and F(0) containing the membrane proton channel, linked together by a central stalk and a peripheral stalk. During catalysis, ATP synthesis in the catalytic domain of F(1) is coupled via a rotary mechanism of the central stalk subunits to proton translocation. Functionally, component of the F(0) channel, it forms part of the peripheral stalk, linking F(1) to F(0). The b'-subunit is a diverged and duplicated form of b found in plants and photosynthetic bacteria. The polypeptide is ATP synthase subunit b' (Microcystis aeruginosa (strain NIES-843 / IAM M-2473)).